The sequence spans 492 residues: Cell division protein FtsA (492 aa).

2 disordered regions span residues 288–307 and 429–458; these read GEETPSQNVQIPTTGSDGHE and YTRTAHQSSPTPHIHSSPTERNLSDLKAPS. Over residues 291-303 the composition is skewed to polar residues; sequence TPSQNVQIPTTGS. Low complexity predominate over residues 436-447; the sequence is SSPTPHIHSSPT.

This sequence belongs to the FtsA/MreB family. Self-interacts. Interacts with FtsZ.

It is found in the cell inner membrane. Cell division protein that is involved in the assembly of the Z ring. May serve as a membrane anchor for the Z ring. The protein is Cell division protein FtsA of Helicobacter pylori (strain ATCC 700392 / 26695) (Campylobacter pylori).